The sequence spans 431 residues: Argininosuccinate lyase (431 aa).

It belongs to the lyase 1 family. Argininosuccinate lyase subfamily.

The protein resides in the cytoplasm. It catalyses the reaction 2-(N(omega)-L-arginino)succinate = fumarate + L-arginine. It participates in amino-acid biosynthesis; L-arginine biosynthesis; L-arginine from L-ornithine and carbamoyl phosphate: step 3/3. The sequence is that of Argininosuccinate lyase from Stenotrophomonas maltophilia (strain R551-3).